Consider the following 263-residue polypeptide: 3-methyl-2-oxobutanoate hydroxymethyltransferase (263 aa).

The Mg(2+) site is built by Asp43 and Asp82. Residues 43-44 (DS), Asp82, and Lys111 contribute to the 3-methyl-2-oxobutanoate site. Glu113 contributes to the Mg(2+) binding site. The Proton acceptor role is filled by Glu179.

The protein belongs to the PanB family. Homodecamer; pentamer of dimers. Requires Mg(2+) as cofactor.

It is found in the cytoplasm. The catalysed reaction is 3-methyl-2-oxobutanoate + (6R)-5,10-methylene-5,6,7,8-tetrahydrofolate + H2O = 2-dehydropantoate + (6S)-5,6,7,8-tetrahydrofolate. It participates in cofactor biosynthesis; (R)-pantothenate biosynthesis; (R)-pantoate from 3-methyl-2-oxobutanoate: step 1/2. In terms of biological role, catalyzes the reversible reaction in which hydroxymethyl group from 5,10-methylenetetrahydrofolate is transferred onto alpha-ketoisovalerate to form ketopantoate. The protein is 3-methyl-2-oxobutanoate hydroxymethyltransferase of Neisseria gonorrhoeae (strain ATCC 700825 / FA 1090).